The primary structure comprises 158 residues: Transcriptional repressor NrdR (158 aa).

A zinc finger spans residues 3 to 34; the sequence is CPYCGYPDSKVIDSRPTDDNTSIRRRRECLKC. The ATP-cone domain maps to 49–139; it reads ILVIKKDNRR…VYRQFKDINT (91 aa).

Belongs to the NrdR family. Zn(2+) is required as a cofactor.

Functionally, negatively regulates transcription of bacterial ribonucleotide reductase nrd genes and operons by binding to NrdR-boxes. This chain is Transcriptional repressor NrdR, found in Thermoanaerobacter sp. (strain X514).